The chain runs to 878 residues: von Willebrand factor A domain-containing protein DDB_G0267758 (878 aa).

The region spanning 36 to 169 (GLFLTENNKK…TVKITLTITS (134 aa)) is the VIT domain. Residues 316–496 (EFIFLIDCSG…ISLKPMFSNI (181 aa)) form the VWFA domain. Over residues 595–623 (SSSSSSSSSSSSSSSSSSSSSSSSSSSSS) the composition is skewed to low complexity. Disordered stretches follow at residues 595-638 (SSSS…HRLS) and 752-774 (SVKK…SKTK). Positions 624-635 (TTTATTNQNQIH) are enriched in polar residues.

This Dictyostelium discoideum (Social amoeba) protein is von Willebrand factor A domain-containing protein DDB_G0267758.